A 694-amino-acid chain; its full sequence is Methionine--tRNA ligase (694 aa).

Residues 14–24 (PYANGPIHLGH) carry the 'HIGH' region motif. Residues cysteine 145, cysteine 148, cysteine 158, and cysteine 161 each coordinate Zn(2+). A 'KMSKS' region motif is present at residues 330–334 (KMSKS). Lysine 333 lines the ATP pocket. Positions 558-579 (SLQATAGQPEPHSQVRHAEHQQ) are disordered. In terms of domain architecture, tRNA-binding spans 593-694 (DFAKVDLRIA…EGAQPGMKVK (102 aa)).

The protein belongs to the class-I aminoacyl-tRNA synthetase family. MetG type 1 subfamily. Homodimer. Zn(2+) serves as cofactor.

It localises to the cytoplasm. It carries out the reaction tRNA(Met) + L-methionine + ATP = L-methionyl-tRNA(Met) + AMP + diphosphate. Is required not only for elongation of protein synthesis but also for the initiation of all mRNA translation through initiator tRNA(fMet) aminoacylation. In Methylococcus capsulatus (strain ATCC 33009 / NCIMB 11132 / Bath), this protein is Methionine--tRNA ligase.